Consider the following 1942-residue polypeptide: GREB1-like protein (1942 aa).

Disordered regions lie at residues serine 76 to glycine 101, proline 235 to threonine 306, methionine 325 to tryptophan 373, and threonine 1123 to valine 1256. The span at glutamate 81 to aspartate 90 shows a compositional bias: acidic residues. The span at serine 237–serine 253 shows a compositional bias: low complexity. Residues asparagine 338–serine 362 are compositionally biased toward polar residues. The span at threonine 1127 to arginine 1155 shows a compositional bias: basic and acidic residues. Residues serine 1158–threonine 1171 are compositionally biased toward low complexity. The segment covering glutamate 1172–serine 1202 has biased composition (polar residues). The span at serine 1212–proline 1248 shows a compositional bias: low complexity. Residues glycine 1861–leucine 1881 form a helical membrane-spanning segment.

It belongs to the GREB1 family.

The protein resides in the membrane. Functionally, plays a major role in early metanephros development. This is GREB1-like protein (greb1l) from Danio rerio (Zebrafish).